A 239-amino-acid polypeptide reads, in one-letter code: Adapter protein MecA (239 aa).

Positions 118–128 (EQRTKEKEAQG) are enriched in basic and acidic residues. The tract at residues 118 to 137 (EQRTKEKEAQGSKRQKSSAR) is disordered.

Belongs to the MecA family. In terms of assembly, homodimer.

Its function is as follows. Enables the recognition and targeting of unfolded and aggregated proteins to the ClpC protease or to other proteins involved in proteolysis. The protein is Adapter protein MecA of Staphylococcus aureus (strain USA300).